A 102-amino-acid chain; its full sequence is Small ribosomal subunit protein bS18 (102 aa).

It belongs to the bacterial ribosomal protein bS18 family. In terms of assembly, part of the 30S ribosomal subunit. Forms a tight heterodimer with protein bS6.

Functionally, binds as a heterodimer with protein bS6 to the central domain of the 16S rRNA, where it helps stabilize the platform of the 30S subunit. The polypeptide is Small ribosomal subunit protein bS18 (Orientia tsutsugamushi (strain Boryong) (Rickettsia tsutsugamushi)).